Here is a 284-residue protein sequence, read N- to C-terminus: GTP cyclohydrolase MptA (284 aa).

This sequence belongs to the GTP cyclohydrolase IV family. Homodimer. Requires Fe(2+) as cofactor.

It carries out the reaction GTP + H2O = 7,8-dihydroneopterin 2',3'-cyclic phosphate + formate + diphosphate + H(+). The protein operates within cofactor biosynthesis; 5,6,7,8-tetrahydromethanopterin biosynthesis. Functionally, converts GTP to 7,8-dihydro-D-neopterin 2',3'-cyclic phosphate, the first intermediate in the biosynthesis of coenzyme methanopterin. The sequence is that of GTP cyclohydrolase MptA from Thermoplasma volcanium (strain ATCC 51530 / DSM 4299 / JCM 9571 / NBRC 15438 / GSS1).